A 720-amino-acid chain; its full sequence is Zinc finger protein 408 (720 aa).

The tract at residues 201-350 (VQQEVASPGE…GPAGSSPKQG (150 aa)) is disordered. The span at 275-285 (LQSNSATQQDP) shows a compositional bias: polar residues. Residues 287–296 (GSGASFSSSA) show a composition bias toward low complexity. Phosphothreonine is present on T322. 10 C2H2-type zinc fingers span residues 353-375 (YRCG…AFVH), 381-403 (FLCT…MLGH), 409-431 (FPCP…QVVH), 437-459 (FACD…RKTH), 468-490 (CPCP…MRLH), 496-518 (FLCP…LRLH), 524-546 (YRCP…LISH), 551-573 (HLCP…ERLH), 579-601 (FPCP…LKSH), and 607-629 (YRCP…QLSH).

As to expression, highest expression is observed in adult retina; abundantly expressed in the fetal eye. In the retina, it is detected in the outer nuclear layer, especially cone and rod photoreceptor cells, ganglion cell layer and both outer and inner plexiform layers (at protein level). Expressed in retinal blood vessels (at protein level).

It is found in the nucleus. May be involved in transcriptional regulation. The protein is Zinc finger protein 408 (ZNF408) of Homo sapiens (Human).